The sequence spans 319 residues: Cutinase cut1 (319 aa).

Residues 1–58 form the signal peptide; it reads MPPHAARPGPAQNRRGRAMAVITPRRERSSLLSRALRFTAAAATALVTAVSLAAPAHA. Tyr-118 is a binding site for poly(ethylene terephthalate). Ser-188 functions as the Nucleophile in the catalytic mechanism. Residues Met-189 and Trp-213 each contribute to the poly(ethylene terephthalate) site. Catalysis depends on charge relay system residues Asp-234 and His-266. Cysteines 299 and 317 form a disulfide.

The protein belongs to the AB hydrolase superfamily.

It is found in the secreted. The protein localises to the periplasm. The catalysed reaction is an acetyl ester + H2O = an aliphatic alcohol + acetate + H(+). It catalyses the reaction a butanoate ester + H2O = an aliphatic alcohol + butanoate + H(+). It carries out the reaction pentanoate ester + H2O = pentanoate + an aliphatic alcohol + H(+). The enzyme catalyses an octanoate ester + H2O = an aliphatic alcohol + octanoate + H(+). The catalysed reaction is decanoate ester + H2O = decanoate + an aliphatic alcohol + H(+). It catalyses the reaction a dodecanoate ester + H2O = an aliphatic alcohol + dodecanoate + H(+). It carries out the reaction a tetradecanoate ester + H2O = an aliphatic alcohol + tetradecanoate + H(+). The enzyme catalyses hexadecanoate ester + H2O = an aliphatic alcohol + hexadecanoate + H(+). The catalysed reaction is cutin + H2O = cutin monomers.. It catalyses the reaction (ethylene terephthalate)(n) + H2O = (ethylene terephthalate)(n-1) + 4-[(2-hydroxyethoxy)carbonyl]benzoate + H(+). With respect to regulation, activated by magnesium ions. Activated by calcium ions. In terms of biological role, catalyzes the hydrolysis of cutin, a polyester that forms the structure of plant cuticle. Shows esterase activity towards p-nitrophenol-linked aliphatic esters (pNP-aliphatic esters). Capable of degrading the plastic poly(ethylene terephthalate) (PET), the most abundant polyester plastic in the world. The chain is Cutinase cut1 from Thermobifida fusca (Thermomonospora fusca).